The chain runs to 298 residues: Syntenin-1 (298 aa).

At S2 the chain carries N-acetylserine. The interval 2–60 (SLYPSLEDLKVDKVIQAQTAFSANPANPAILSEASAPIPHDGNLYPRLYPELSQYMGLS) is interaction with PDCD6IP. 3 consecutive short sequence motifs (LYPX(n)L motif) follow at residues 3-7 (LYPSL), 45-49 (LYPRL), and 49-53 (LYPEL). At S6 the chain carries Phosphoserine. Y46 is subject to Phosphotyrosine. PDZ domains lie at 114–193 (EVIL…IRDR) and 198–273 (TITM…MPAF). A 1,2-diacyl-sn-glycero-3-phospho-(1D-myo-inositol-4,5-bisphosphate) is bound by residues N215 and 250 to 251 (KD).

As to quaternary structure, monomer and homodimer. Interacts with SDC1, SDC2, SDC3, SDC4, NRXN2, EPHA7, EPHB1, NF2 isoform 1, TGFA and IL5RA. Interacts with NFASC and PTPRJ. Interacts with SDCBP2. Interacts with PDCD6IP. Forms a complex with PDCD6IP and SDC2. Interacts (via C-terminus) with TGFBR1. Binds to FZD7; this interaction is increased by inositol trisphosphate (IP3). Interacts with SMO. In terms of processing, phosphorylated on tyrosine residues. As to expression, expressed in lung cancers, including adenocarcinoma, squamous cell carcinoma and small-cell carcinoma (at protein level). Widely expressed. Expressed in fetal kidney, liver, lung and brain. In adult highest expression in heart and placenta.

It is found in the cell junction. The protein resides in the focal adhesion. The protein localises to the adherens junction. Its subcellular location is the cell membrane. It localises to the endoplasmic reticulum membrane. It is found in the nucleus. The protein resides in the melanosome. The protein localises to the cytoplasm. Its subcellular location is the cytosol. It localises to the cytoskeleton. It is found in the secreted. The protein resides in the extracellular exosome. The protein localises to the membrane raft. Its function is as follows. Multifunctional adapter protein involved in diverse array of functions including trafficking of transmembrane proteins, neuro and immunomodulation, exosome biogenesis, and tumorigenesis. Positively regulates TGFB1-mediated SMAD2/3 activation and TGFB1-induced epithelial-to-mesenchymal transition (EMT) and cell migration in various cell types. May increase TGFB1 signaling by enhancing cell-surface expression of TGFR1 by preventing the interaction between TGFR1 and CAV1 and subsequent CAV1-dependent internalization and degradation of TGFR1. In concert with SDC1/4 and PDCD6IP, regulates exosome biogenesis. Regulates migration, growth, proliferation, and cell cycle progression in a variety of cancer types. In adherens junctions may function to couple syndecans to cytoskeletal proteins or signaling components. Seems to couple transcription factor SOX4 to the IL-5 receptor (IL5RA). May also play a role in vesicular trafficking. Seems to be required for the targeting of TGFA to the cell surface in the early secretory pathway. This Homo sapiens (Human) protein is Syntenin-1 (SDCBP).